A 215-amino-acid chain; its full sequence is UPF0502 protein YceH (215 aa).

Belongs to the UPF0502 family.

This Salmonella paratyphi B (strain ATCC BAA-1250 / SPB7) protein is UPF0502 protein YceH.